The following is a 338-amino-acid chain: Sorting nexin-15 (338 aa).

Residues Met1 to Arg131 form the PX domain. A 1,2-diacyl-sn-glycero-3-phospho-(1D-myo-inositol-3-phosphate) is bound by residues Arg52, Ser54, Arg88, and Arg97. Residue Arg106 is modified to Omega-N-methylarginine. A disordered region spans residues Glu134–Ala155. Over residues Leu142–Pro151 the composition is skewed to pro residues. Phosphoserine occurs at positions 202 and 228. The tract at residues Val240 to Leu270 is disordered. An MIT domain is found at Ala266–Pro338.

Belongs to the sorting nexin family. In terms of assembly, homodimer. Interacts with SNX1, SNX2 and SNX4.

Its subcellular location is the cytoplasm. The protein localises to the membrane. It is found in the cytoplasmic vesicle membrane. In terms of biological role, may be involved in several stages of intracellular trafficking. Overexpression of SNX15 disrupts the normal trafficking of proteins from the plasma membrane to recycling endosomes or the TGN. This is Sorting nexin-15 (Snx15) from Rattus norvegicus (Rat).